The primary structure comprises 170 residues: ATP synthase subunit b (170 aa).

A helical transmembrane segment spans residues 4–24 (ILLLGLALAPVALFASQGAVE).

This sequence belongs to the ATPase B chain family. F-type ATPases have 2 components, F(1) - the catalytic core - and F(0) - the membrane proton channel. F(1) has five subunits: alpha(3), beta(3), gamma(1), delta(1), epsilon(1). F(0) has three main subunits: a(1), b(2) and c(10-14). The alpha and beta chains form an alternating ring which encloses part of the gamma chain. F(1) is attached to F(0) by a central stalk formed by the gamma and epsilon chains, while a peripheral stalk is formed by the delta and b chains.

The protein localises to the cell inner membrane. F(1)F(0) ATP synthase produces ATP from ADP in the presence of a proton or sodium gradient. F-type ATPases consist of two structural domains, F(1) containing the extramembraneous catalytic core and F(0) containing the membrane proton channel, linked together by a central stalk and a peripheral stalk. During catalysis, ATP synthesis in the catalytic domain of F(1) is coupled via a rotary mechanism of the central stalk subunits to proton translocation. Its function is as follows. Component of the F(0) channel, it forms part of the peripheral stalk, linking F(1) to F(0). The protein is ATP synthase subunit b of Aliarcobacter butzleri (strain RM4018) (Arcobacter butzleri).